A 332-amino-acid polypeptide reads, in one-letter code: Ribosomal RNA-processing protein 8 (332 aa).

Residues 1 to 109 (MGKKRINEVS…EVEKKNEEGD (109 aa)) are disordered. Basic residues-rich tracts occupy residues 38 to 53 (KKKK…KLAA) and 82 to 94 (KKKK…KKKY). Positions 95–109 (KPEAAEVEKKNEEGD) are enriched in basic and acidic residues. 6 residues coordinate S-adenosyl-L-methionine: His158, Gly193, Asp213, Asp225, Met226, and Cys242.

It belongs to the methyltransferase superfamily. RRP8 family.

Its subcellular location is the nucleus. It is found in the nucleolus. Functionally, probable methyltransferase required to silence rDNA. This is Ribosomal RNA-processing protein 8 (rrp-8) from Caenorhabditis briggsae.